The following is a 238-amino-acid chain: MKIFICEDDPKQRENMVTIIKNYIMIEEKPMEIALATDNPYEVLEQAKNMNDIGCYFLDIQLSTDINGIKLGSEIRKHDPVGNIIFVTSHSELTYLTFVYKVAAMDFIFKDDPAELRTRIIDCLETAHTRLQLLSKDNSVETIELKRGSNSVYVQYDDIMFFESSTKSHRLIAHLDNRQIEFYGNLKELSQLDDRFFRCHNSFVVNRHNIESIDSKERIVYFKNKEHCYASVRNVKKI.

The 124-residue stretch at 2-125 (KIFICEDDPK…LRTRIIDCLE (124 aa)) folds into the Response regulatory domain. The residue at position 59 (Asp-59) is a 4-aspartylphosphate. An HTH LytTR-type domain is found at 143–238 (IELKRGSNSV…YASVRNVKKI (96 aa)).

The protein localises to the cytoplasm. Its function is as follows. Required for high-level post-exponential phase expression of a series of secreted proteins. The chain is Accessory gene regulator A (agrA) from Staphylococcus aureus (strain COL).